The following is a 660-amino-acid chain: FAST kinase domain-containing protein 3, mitochondrial (660 aa).

The N-terminal 57 residues, 1–57, are a transit peptide targeting the mitochondrion; sequence MALVTLRRNLYHLSDFRIHGALAALKTQQVNHVHKTVKEHLCPWFWSQHPGPIRVRF. One can recognise an RAP domain in the interval 591–649; that stretch reads VALCIDGPKRFCLNSKHLLGKEATKQRHLRLLGYQVVQIPYYEIEMLKSRLELVDYLQG.

The protein belongs to the FAST kinase family.

The protein localises to the mitochondrion. In terms of biological role, required for normal mitochondrial respiration. Increases steady-state levels and half-lives of a subset of mature mitochondrial mRNAs MT-ND2, MT-ND3, MT-CYTB, MT-CO2, and MT-ATP8/6. Promotes MT-CO1 mRNA translation and increases mitochondrial complex IV assembly and activity. This is FAST kinase domain-containing protein 3, mitochondrial (FASTKD3) from Bos taurus (Bovine).